Reading from the N-terminus, the 632-residue chain is Probable potassium transport system protein Kup 1 (632 aa).

The next 12 helical transmembrane spans lie at 17 to 37, 60 to 80, 106 to 126, 146 to 166, 175 to 195, 210 to 230, 254 to 274, 292 to 312, 344 to 364, 370 to 390, 401 to 421, and 426 to 446; these read LFYLALGSVGVVYGDIGTSPL, LISLMIWALTIIVTIKYVLFL, TAILMLLGLMGAALFLGDAMI, LADYIVPISVVILALLFVVQS, FFGPITAVWFLVMAAAGISHI, AVAFLLHEGFYGIVVLGAVFL, WFLLVFPALTLNYLGQGALVL, ALLPVVILATAATIIASQAVI, IFVPSVNAVLFIGVIFLVLGF, LATAYGISVTGAMVVTSIMAF, LPVAVIALAPLVVLEMIFLGA, and IHDGGYIPIMIATAFTVVMWT.

It belongs to the HAK/KUP transporter (TC 2.A.72) family.

It localises to the cell inner membrane. The catalysed reaction is K(+)(in) + H(+)(in) = K(+)(out) + H(+)(out). Transport of potassium into the cell. Likely operates as a K(+):H(+) symporter. The protein is Probable potassium transport system protein Kup 1 of Rhizobium johnstonii (strain DSM 114642 / LMG 32736 / 3841) (Rhizobium leguminosarum bv. viciae).